The primary structure comprises 261 residues: Lytic polysaccharide monooxygenase-like protein X325 (261 aa).

The signal sequence occupies residues 1 to 17 (MQLSALALATLLATANA). H18, H64, and D133 together coordinate Cu(2+). Cystine bridges form between C39–C139 and C108–C155. N-linked (GlcNAc...) asparagine glycosylation is found at N157 and N183. The segment at 174 to 210 (LAENTQGSGNSSGHAHGSSGSGSASASKTDSKSSAAS) is disordered. The span at 180 to 210 (GSGNSSGHAHGSSGSGSASASKTDSKSSAAS) shows a compositional bias: low complexity. The GPI-anchor amidated asparagine moiety is linked to residue N238. Residues 239–261 (SGSLAYVNGALAIGGVVAAALLI) constitute a propeptide, removed in mature form.

Belongs to the X325 family. It depends on Cu(2+) as a cofactor.

It is found in the cell membrane. Functionally, lytic polysaccharide monooxygenase-like protein that has diverged to biological functions other than polysaccharide degradation since it does not perform oxidative cleavage of polysaccharides. Acts as a cell surface-bound protein that functions in the copper-accumulation pathway. In Yarrowia lipolytica (strain CLIB 122 / E 150) (Yeast), this protein is Lytic polysaccharide monooxygenase-like protein X325.